Consider the following 816-residue polypeptide: Pentatricopeptide repeat-containing protein At5g12100, mitochondrial (816 aa).

Residues 1 to 39 (MVTRLRLVSRSSRYATVKFTDSVSACSCRRLFSASTDPE) constitute a mitochondrion transit peptide. A disordered region spans residues 34–57 (ASTDPEPESQPEQAPPTNPVTGDE). PPR repeat units lie at residues 108–142 (HDFS…GIYP), 143–177 (SSDS…DFRP), 178–212 (SKFM…RIYP), 213–247 (SVFI…RLLP), 248–282 (SLIT…HIEP), 283–317 (SLIT…GFVP), 318–352 (DAFT…GVKM), 353–387 (NAYT…GLVP), 388–422 (NEVI…GMKP), 423–457 (DHLA…GVSP), 458–492 (SVET…GTMP), 493–527 (NVVS…GVSP), 528–562 (KVRI…GIEL), 563–597 (NLVT…GLKP), 598–632 (DVFT…GIKP), 633–662 (TLKT…MSLK), 664–698 (DLLV…SIGL), 699–733 (DKTT…EMEP), 734–768 (EADT…GFLL), and 769–803 (DVCI…MLGD).

Belongs to the PPR family. P subfamily.

It is found in the mitochondrion. This Arabidopsis thaliana (Mouse-ear cress) protein is Pentatricopeptide repeat-containing protein At5g12100, mitochondrial.